The chain runs to 175 residues: Ribosome maturation factor RimM (175 aa).

Residues 100 to 174 (EDEYYWNDVI…VKHKIITVIW (75 aa)) enclose the PRC barrel domain.

It belongs to the RimM family. In terms of assembly, binds ribosomal protein uS19.

It localises to the cytoplasm. Functionally, an accessory protein needed during the final step in the assembly of 30S ribosomal subunit, possibly for assembly of the head region. Essential for efficient processing of 16S rRNA. May be needed both before and after RbfA during the maturation of 16S rRNA. It has affinity for free ribosomal 30S subunits but not for 70S ribosomes. In Buchnera aphidicola subsp. Schizaphis graminum (strain Sg), this protein is Ribosome maturation factor RimM.